The chain runs to 234 residues: Filarial antigen Av33 (234 aa).

The first 17 residues, 1–17 (MKILSCLLLCTITVLEG), serve as a signal peptide directing secretion. Cysteines 135 and 230 form a disulfide. The interval 204–234 (TSQASEATTIPTTTQTPVEAPETPSFCVPIY) is disordered. The segment covering 211 to 220 (TTIPTTTQTP) has biased composition (low complexity).

This sequence belongs to the protease inhibitor I33 family.

It localises to the secreted. Its function is as follows. Aspartyl protease inhibitor. This chain is Filarial antigen Av33, found in Acanthocheilonema viteae (Filarial nematode worm).